A 172-amino-acid polypeptide reads, in one-letter code: Large ribosomal subunit protein uL5 (172 aa).

The protein belongs to the universal ribosomal protein uL5 family. As to quaternary structure, component of the large ribosomal subunit.

The protein resides in the nucleus. The protein localises to the cytoplasm. In terms of biological role, component of the ribosome, a large ribonucleoprotein complex responsible for the synthesis of proteins in the cell. The small ribosomal subunit (SSU) binds messenger RNAs (mRNAs) and translates the encoded message by selecting cognate aminoacyl-transfer RNA (tRNA) molecules. The large subunit (LSU) contains the ribosomal catalytic site termed the peptidyl transferase center (PTC), which catalyzes the formation of peptide bonds, thereby polymerizing the amino acids delivered by tRNAs into a polypeptide chain. The nascent polypeptides leave the ribosome through a tunnel in the LSU and interact with protein factors that function in enzymatic processing, targeting, and the membrane insertion of nascent chains at the exit of the ribosomal tunnel. This Tetrahymena thermophila protein is Large ribosomal subunit protein uL5 (RPL11).